A 188-amino-acid chain; its full sequence is dCTP deaminase (188 aa).

109 to 114 is a binding site for dCTP; it reads KSTYAR. Residue Glu-135 is the Proton donor/acceptor of the active site. 3 residues coordinate dCTP: Gln-154, Tyr-168, and Gln-178.

The protein belongs to the dCTP deaminase family. Homotrimer.

The catalysed reaction is dCTP + H2O + H(+) = dUTP + NH4(+). It participates in pyrimidine metabolism; dUMP biosynthesis; dUMP from dCTP (dUTP route): step 1/2. Catalyzes the deamination of dCTP to dUTP. This Helicobacter pylori (strain P12) protein is dCTP deaminase.